Reading from the N-terminus, the 770-residue chain is Coiled-coil alpha-helical rod protein 1 (770 aa).

3 coiled-coil regions span residues 56–289, 334–420, and 476–669; these read STVT…DLQA, LRNW…RQEQ, and GLMA…RKEE. 4 disordered regions span residues 573–592, 641–672, 700–721, and 744–770; these read LEAA…SLRQ, LRQI…EGQR, NKKC…AASC, and SRDE…PLLS. The segment covering 648–672 has biased composition (basic and acidic residues); it reads ATQEKERNQELRRLQDEARKEEGQR. The span at 701–721 shows a compositional bias: low complexity; that stretch reads KKCSPRSVESSSSESPAAASC.

Its subcellular location is the cytoplasm. The protein localises to the nucleus. May be a regulator of keratinocyte proliferation or differentiation. This chain is Coiled-coil alpha-helical rod protein 1 (Cchcr1), found in Mus musculus (Mouse).